We begin with the raw amino-acid sequence, 142 residues long: uncharacterized protein (142 aa).

This is an uncharacterized protein from Invertebrate iridescent virus 3 (IIV-3).